A 347-amino-acid chain; its full sequence is UDP-N-acetylenolpyruvoylglucosamine reductase (347 aa).

The region spanning 15–187 (FGIEQTCSYL…TAIGLKLPKR (173 aa)) is the FAD-binding PCMH-type domain. Arg-163 is an active-site residue. The active-site Proton donor is Ser-233. Glu-328 is an active-site residue.

Belongs to the MurB family. It depends on FAD as a cofactor.

It is found in the cytoplasm. The catalysed reaction is UDP-N-acetyl-alpha-D-muramate + NADP(+) = UDP-N-acetyl-3-O-(1-carboxyvinyl)-alpha-D-glucosamine + NADPH + H(+). The protein operates within cell wall biogenesis; peptidoglycan biosynthesis. Its function is as follows. Cell wall formation. The sequence is that of UDP-N-acetylenolpyruvoylglucosamine reductase from Vibrio parahaemolyticus serotype O3:K6 (strain RIMD 2210633).